We begin with the raw amino-acid sequence, 500 residues long: UDP-N-acetylmuramoylalanine--D-glutamate ligase (500 aa).

Position 111-117 (111-117 (GTNGKST)) interacts with ATP. Positions 260–306 (DISFELQHNSESFRQDEFQGEPAEPECIKIREHRQDLQNSLVSSFMH) constitute an RPE3 insert domain.

This sequence belongs to the MurCDEF family.

It localises to the cytoplasm. The catalysed reaction is UDP-N-acetyl-alpha-D-muramoyl-L-alanine + D-glutamate + ATP = UDP-N-acetyl-alpha-D-muramoyl-L-alanyl-D-glutamate + ADP + phosphate + H(+). It participates in cell wall biogenesis; peptidoglycan biosynthesis. Its function is as follows. Cell wall formation. Catalyzes the addition of glutamate to the nucleotide precursor UDP-N-acetylmuramoyl-L-alanine (UMA). This Rickettsia conorii (strain ATCC VR-613 / Malish 7) protein is UDP-N-acetylmuramoylalanine--D-glutamate ligase (murD).